The primary structure comprises 432 residues: Adenylosuccinate synthetase (432 aa).

GTP-binding positions include 13-19 (GDEGKGK) and 41-43 (GHT). Asp-14 (proton acceptor) is an active-site residue. Positions 14 and 41 each coordinate Mg(2+). IMP contacts are provided by residues 14 to 17 (DEGK), 39 to 42 (NAGH), Thr-130, Arg-144, Gln-225, Thr-240, and Arg-304. The Proton donor role is filled by His-42. Position 300–306 (300–306 (ATTGRRR)) interacts with substrate. Residues Arg-306, 332–334 (KLD), and 415–417 (STG) each bind GTP.

This sequence belongs to the adenylosuccinate synthetase family. Homodimer. It depends on Mg(2+) as a cofactor.

The protein localises to the cytoplasm. The catalysed reaction is IMP + L-aspartate + GTP = N(6)-(1,2-dicarboxyethyl)-AMP + GDP + phosphate + 2 H(+). The protein operates within purine metabolism; AMP biosynthesis via de novo pathway; AMP from IMP: step 1/2. Its function is as follows. Plays an important role in the de novo pathway of purine nucleotide biosynthesis. Catalyzes the first committed step in the biosynthesis of AMP from IMP. This chain is Adenylosuccinate synthetase, found in Cronobacter sakazakii (strain ATCC BAA-894) (Enterobacter sakazakii).